Consider the following 117-residue polypeptide: Large ribosomal subunit protein bL20 (117 aa).

The protein belongs to the bacterial ribosomal protein bL20 family.

Its function is as follows. Binds directly to 23S ribosomal RNA and is necessary for the in vitro assembly process of the 50S ribosomal subunit. It is not involved in the protein synthesizing functions of that subunit. The sequence is that of Large ribosomal subunit protein bL20 (rplT) from Synechocystis sp. (strain ATCC 27184 / PCC 6803 / Kazusa).